The chain runs to 436 residues: Enolase (436 aa).

Residue Gln167 participates in (2R)-2-phosphoglycerate binding. Glu209 (proton donor) is an active-site residue. Asp246, Glu291, and Asp318 together coordinate Mg(2+). Residues Lys343, Arg372, Ser373, and Lys394 each contribute to the (2R)-2-phosphoglycerate site. Lys343 functions as the Proton acceptor in the catalytic mechanism.

The protein belongs to the enolase family. Component of the RNA degradosome, a multiprotein complex involved in RNA processing and mRNA degradation. Mg(2+) is required as a cofactor.

It localises to the cytoplasm. The protein resides in the secreted. It is found in the cell surface. It catalyses the reaction (2R)-2-phosphoglycerate = phosphoenolpyruvate + H2O. Its pathway is carbohydrate degradation; glycolysis; pyruvate from D-glyceraldehyde 3-phosphate: step 4/5. In terms of biological role, catalyzes the reversible conversion of 2-phosphoglycerate (2-PG) into phosphoenolpyruvate (PEP). It is essential for the degradation of carbohydrates via glycolysis. The polypeptide is Enolase (Haemophilus influenzae (strain PittEE)).